We begin with the raw amino-acid sequence, 230 residues long: uncharacterized protein (230 aa).

An N-terminal signal peptide occupies residues 1–22; that stretch reads MNIRSFLLISIFTAISYLVVDG. Over 23 to 167 the chain is Lumenal; it reads ATPRTFAPSA…YTPYGGVKAL (145 aa). The interval 55–90 is disordered; that stretch reads SSSSSSSSISTSHDSQPSTSSSSPSSTSTSSSSGTS. Residues 168-188 form a helical membrane-spanning segment; that stretch reads IGILVGVVVGSVFLLAIVMVI. At 189–230 the chain is on the cytoplasmic side; it reads ARIWGPRLLANKDQNNNNEDLDSNLVSKDSEGTPQITYASNF. The interval 208-230 is disordered; sequence DLDSNLVSKDSEGTPQITYASNF.

Its subcellular location is the endoplasmic reticulum membrane. This is an uncharacterized protein from Schizosaccharomyces pombe (strain 972 / ATCC 24843) (Fission yeast).